The chain runs to 152 residues: Small ribosomal subunit protein uS13 (152 aa).

The tract at residues 133–152 is disordered; that stretch reads GQHTKTTGRRGRTVGVSKKK.

This sequence belongs to the universal ribosomal protein uS13 family.

It localises to the cytoplasm. Located at the top of the head of the 40S subunit, it contacts several helices of the 18S rRNA. The sequence is that of Small ribosomal subunit protein uS13 (RpS18) from Spodoptera frugiperda (Fall armyworm).